We begin with the raw amino-acid sequence, 454 residues long: Tyrosine aminotransferase (454 aa).

M1 is subject to N-acetylmethionine. At K280 the chain carries N6-(pyridoxal phosphate)lysine. The residue at position 448 (S448) is a Phosphoserine.

Belongs to the class-I pyridoxal-phosphate-dependent aminotransferase family. In terms of assembly, homodimer. Pyridoxal 5'-phosphate serves as cofactor.

It carries out the reaction L-tyrosine + 2-oxoglutarate = 3-(4-hydroxyphenyl)pyruvate + L-glutamate. It participates in amino-acid degradation; L-phenylalanine degradation; acetoacetate and fumarate from L-phenylalanine: step 2/6. Transaminase involved in tyrosine breakdown. Converts tyrosine to p-hydroxyphenylpyruvate. Can catalyze the reverse reaction, using glutamic acid, with 2-oxoglutarate as cosubstrate (in vitro). Has much lower affinity and transaminase activity towards phenylalanine. The sequence is that of Tyrosine aminotransferase (TAT) from Homo sapiens (Human).